The sequence spans 1422 residues: FH1/FH2 domain-containing protein 3 (1422 aa).

A GBD/FH3 domain is found at 18-411; sequence NSTNFPEPSR…NFGNNSYHSS (394 aa). 8 disordered regions span residues 323-464, 521-666, 687-708, 754-781, 821-849, 1262-1305, 1320-1357, and 1374-1410; these read RHED…RRRQ, ACLA…GVNG, RKSP…QEAE, SGDL…VQPK, LGHR…PPLL, QQKQ…SYAE, SSPS…SPNV, and TQVP…EEAR. The residue at position 345 (Ser-345) is a Phosphoserine. Residues 357–366 show a composition bias toward basic residues; it reads LDRRRSRRHS. Residues 367 to 390 are compositionally biased toward polar residues; it reads VQSIKSTLSAPTSPCSQSAPSFKP. Ser-375 carries the post-translational modification Phosphoserine. Residues 410 to 430 are compositionally biased toward low complexity; the sequence is SSRPSSGSSVPTTPTSSVSPP. The span at 438-449 shows a compositional bias: polar residues; that stretch reads SSPSGLLTSSFR. Residues 448–480 are a coiled coil; the sequence is FRQHQESLAAERERRRQEREERLQRIEREERNK. Residues 450–464 show a composition bias toward basic and acidic residues; the sequence is QHQESLAAERERRRQ. Low complexity predominate over residues 521–535; that stretch reads ACLAPLSHSPSSSDS. The span at 536-547 shows a compositional bias: polar residues; that stretch reads QEALTVSASSPG. 2 stretches are compositionally biased toward acidic residues: residues 559-569 and 592-603; these read PEPESEAEPEA and ETEVEQALEQEP. The segment covering 604–624 has biased composition (basic and acidic residues); it reads EERASLSEKERQNEGVNERDN. The span at 626–635 shows a compositional bias: low complexity; the sequence is SASSVSSSSS. The segment covering 637–651 has biased composition (basic and acidic residues); sequence LEREEKEDKLSRDRT. Ser-763 carries the phosphoserine modification. Position 775 is a phosphothreonine (Thr-775). The span at 827 to 849 shows a compositional bias: pro residues; the sequence is PGPPPPPPPTFLGLPPPPPPPLL. The FH1 domain maps to 827–858; it reads PGPPPPPPPTFLGLPPPPPPPLLDSIPPPPVP. The FH2 domain occupies 883–1279; it reads GQPTFTKKKK…HRERNKTRGK (397 aa). The span at 1264–1278 shows a compositional bias: basic residues; that stretch reads KQKRANHRERNKTRG. The 33-residue stretch at 1359 to 1391 folds into the DAD domain; it reads DDAADEIMDRIVKSATQVPSQRVVPRERKRSRA. The span at 1385–1400 shows a compositional bias: basic residues; that stretch reads ERKRSRANRKSLRRTL.

It belongs to the formin homology family. Interacts with nestin/NES-based interfilament (IF). Interacts with SQSTM1; isoform 4 threonine phosphorylation disrupts SQSTM1-binding. Phosphorylated on Thr-1474 and Thr-1476 by CK2. As to expression, expressed in the heart, kidney and brain. May be down-regulated in various types of heart diseases, including idiopathic dilated, ventricular dilated, familial dilated and perinatal dilated cardiomyopathies, as well as ischemic heart disease (at protein level).

Its subcellular location is the cytoplasm. The protein resides in the cytoskeleton. The protein localises to the myofibril. It is found in the sarcomere. It localises to the z line. Actin-organizing protein that may cause stress fiber formation together with cell elongation. Isoform 4 may play a role in actin filament polymerization in cardiomyocytes. In Homo sapiens (Human), this protein is FH1/FH2 domain-containing protein 3 (FHOD3).